A 402-amino-acid polypeptide reads, in one-letter code: Nicotinate phosphoribosyltransferase (402 aa).

At His-224 the chain carries Phosphohistidine; by autocatalysis.

The protein belongs to the NAPRTase family. In terms of processing, transiently phosphorylated on a His residue during the reaction cycle. Phosphorylation strongly increases the affinity for substrates and increases the rate of nicotinate D-ribonucleotide production. Dephosphorylation regenerates the low-affinity form of the enzyme, leading to product release.

The catalysed reaction is nicotinate + 5-phospho-alpha-D-ribose 1-diphosphate + ATP + H2O = nicotinate beta-D-ribonucleotide + ADP + phosphate + diphosphate. It functions in the pathway cofactor biosynthesis; NAD(+) biosynthesis; nicotinate D-ribonucleotide from nicotinate: step 1/1. Functionally, catalyzes the synthesis of beta-nicotinate D-ribonucleotide from nicotinate and 5-phospho-D-ribose 1-phosphate at the expense of ATP. This is Nicotinate phosphoribosyltransferase from Neisseria meningitidis serogroup B (strain ATCC BAA-335 / MC58).